The sequence spans 202 residues: Regulator of G-protein signaling 16 (202 aa).

S-palmitoyl cysteine attachment occurs at residues C2 and C12. The RGS domain maps to S65 to A181. Position 168 is a phosphotyrosine; by EGFR (Y168). Y177 is modified (phosphotyrosine).

Interacts with GNAI1 and GNAQ. Interacts with GNAI2, GNAI3 and GNAO1. Palmitoylated on Cys-2 and/or Cys-12. In terms of processing, phosphorylated. Phosphorylation at Tyr-168 by EGFR enhances GTPase accelerating (GAP) activity toward GNAI1. In terms of tissue distribution, abundantly expressed in retina with lower levels of expression in most other tissues.

The protein resides in the membrane. Regulates G protein-coupled receptor signaling cascades. Inhibits signal transduction by increasing the GTPase activity of G protein alpha subunits, thereby driving them into their inactive GDP-bound form. Plays an important role in the phototransduction cascade by regulating the lifetime and effective concentration of activated transducin alpha. May regulate extra and intracellular mitogenic signals. The chain is Regulator of G-protein signaling 16 (RGS16) from Homo sapiens (Human).